A 424-amino-acid chain; its full sequence is O-methyltransferase aunD (424 aa).

D275 contributes to the S-adenosyl-L-methionine binding site. H326 functions as the Proton acceptor in the catalytic mechanism.

Belongs to the class I-like SAM-binding methyltransferase superfamily. Cation-independent O-methyltransferase family.

Its pathway is secondary metabolite biosynthesis. Its function is as follows. O-methyltransferase; part of the gene cluster that mediates the biosynthesis of aurasperone B, a dimeric gamma-naphthopyrone. The first step in the biosynthesis of aurasperone B is the production of gamma-naphthopyrone precursor YWA1 by the non-reducing polyketide synthase albA, via condensation of one acetyl-CoA starter unit with 6 malonyl-CoA units. YWA1 is then methylated by aunE at position C-6 to yield foncesin which is further methylated at position C-8 by aunD to produce fonsecin B. A key enzyme in the biosynthetic pathway is the cytochrome P450 monooxygenase aunB which catalyzes the oxidative dimerization of fonsecin B to aurasperone B. AunB also catalyzes the oxidative dimerization of rubrofusarin B into aurasperone A. This Aspergillus niger (strain ATCC MYA-4892 / CBS 513.88 / FGSC A1513) protein is O-methyltransferase aunD.